Reading from the N-terminus, the 281-residue chain is ATP phosphoribosyltransferase (281 aa).

The protein belongs to the ATP phosphoribosyltransferase family. Long subfamily. The cofactor is Mg(2+).

It is found in the cytoplasm. It carries out the reaction 1-(5-phospho-beta-D-ribosyl)-ATP + diphosphate = 5-phospho-alpha-D-ribose 1-diphosphate + ATP. The protein operates within amino-acid biosynthesis; L-histidine biosynthesis; L-histidine from 5-phospho-alpha-D-ribose 1-diphosphate: step 1/9. Its activity is regulated as follows. Feedback inhibited by histidine. Catalyzes the condensation of ATP and 5-phosphoribose 1-diphosphate to form N'-(5'-phosphoribosyl)-ATP (PR-ATP). Has a crucial role in the pathway because the rate of histidine biosynthesis seems to be controlled primarily by regulation of HisG enzymatic activity. In Corynebacterium glutamicum (strain R), this protein is ATP phosphoribosyltransferase.